The sequence spans 554 residues: Oxygen-dependent choline dehydrogenase (554 aa).

Residue 4–33 (DYIIIGAGSAGNVLATRLTEDPNTTVLLLE) participates in FAD binding. The active-site Proton acceptor is the His473.

Belongs to the GMC oxidoreductase family. The cofactor is FAD.

It carries out the reaction choline + A = betaine aldehyde + AH2. The enzyme catalyses betaine aldehyde + NAD(+) + H2O = glycine betaine + NADH + 2 H(+). Its pathway is amine and polyamine biosynthesis; betaine biosynthesis via choline pathway; betaine aldehyde from choline (cytochrome c reductase route): step 1/1. Functionally, involved in the biosynthesis of the osmoprotectant glycine betaine. Catalyzes the oxidation of choline to betaine aldehyde and betaine aldehyde to glycine betaine at the same rate. The chain is Oxygen-dependent choline dehydrogenase from Klebsiella pneumoniae (strain 342).